The chain runs to 758 residues: ATP-dependent RNA helicase dbp7 (758 aa).

Disordered regions lie at residues 28–98 and 110–130; these read TWRD…NQPR and EPQK…KPTN. Residues 35 to 45 are compositionally biased toward basic residues; the sequence is AKKIAKHHAKG. Over residues 84-98 the composition is skewed to polar residues; the sequence is GKQQSHGHPHSNQPR. Basic and acidic residues predominate over residues 110–125; sequence EPQKAEEVKEEGHVEN. The short motif at 138–167 is the Q motif element; it reads DTFTNLGLSPNLAAHLLTKLELKAPTAIQK. The region spanning 171–372 is the Helicase ATP-binding domain; it reads SQLLKEEGDA…EISLKDAVHI (202 aa). 184-191 is an ATP binding site; sequence AETGSGKT. The DEAD box motif lies at 308–311; that stretch reads DEGD. The Helicase C-terminal domain maps to 398-620; sequence QLKQSYAVVA…NVESGNKDWE (223 aa). 2 stretches are compositionally biased toward basic and acidic residues: residues 455 to 471 and 697 to 709; these read KEDG…EEKP and GKEE…KAER. Disordered regions lie at residues 455–483 and 697–745; these read KEDG…APAT and GKEE…RAKM.

This sequence belongs to the DEAD box helicase family. DDX31/DBP7 subfamily.

The protein resides in the nucleus. Its subcellular location is the nucleolus. It catalyses the reaction ATP + H2O = ADP + phosphate + H(+). Functionally, ATP-binding RNA helicase involved in the biogenesis of 60S ribosomal subunits and is required for the normal formation of 25S and 5.8S rRNAs. This is ATP-dependent RNA helicase dbp7 (dbp7) from Aspergillus fumigatus (strain ATCC MYA-4609 / CBS 101355 / FGSC A1100 / Af293) (Neosartorya fumigata).